The primary structure comprises 417 residues: Gamma-glutamyl phosphate reductase (417 aa).

Belongs to the gamma-glutamyl phosphate reductase family.

It is found in the cytoplasm. The enzyme catalyses L-glutamate 5-semialdehyde + phosphate + NADP(+) = L-glutamyl 5-phosphate + NADPH + H(+). It functions in the pathway amino-acid biosynthesis; L-proline biosynthesis; L-glutamate 5-semialdehyde from L-glutamate: step 2/2. Its function is as follows. Catalyzes the NADPH-dependent reduction of L-glutamate 5-phosphate into L-glutamate 5-semialdehyde and phosphate. The product spontaneously undergoes cyclization to form 1-pyrroline-5-carboxylate. The chain is Gamma-glutamyl phosphate reductase from Phocaeicola vulgatus (strain ATCC 8482 / DSM 1447 / JCM 5826 / CCUG 4940 / NBRC 14291 / NCTC 11154) (Bacteroides vulgatus).